The primary structure comprises 91 residues: C-C motif chemokine 5 (91 aa).

The signal sequence occupies residues 1–23 (MKVSAAALCVILTTAALCVPASA). Cystine bridges form between Cys33-Cys57 and Cys34-Cys73.

It belongs to the intercrine beta (chemokine CC) family.

Its subcellular location is the secreted. Its function is as follows. Chemoattractant for blood monocytes, memory T-helper cells and eosinophils. Causes the release of histamine from basophils and activates eosinophils. May activate several chemokine receptors including CCR1, CCR3, CCR4 and CCR5. May also be an agonist of the G protein-coupled receptor GPR75. Together with GPR75, may play a role in neuron survival through activation of a downstream signaling pathway involving the PI3, Akt and MAP kinases. By activating GPR75 may also play a role in insulin secretion by islet cells. The sequence is that of C-C motif chemokine 5 (CCL5) from Cavia porcellus (Guinea pig).